The following is a 397-amino-acid chain: Kappa-carrageenase (397 aa).

The signal sequence occupies residues 1 to 25 (MKPISIVAFPIPAISMLLLSAVSQA). One can recognise a GH16 domain in the interval 26–299 (ASMQPPIAKP…YVRTWVKVGN (274 aa)). A disulfide bridge links cysteine 98 with cysteine 268. Residue glutamate 163 is the Nucleophile of the active site. Aspartate 165 is an active-site residue. The Proton donor role is filled by glutamate 168. The BIG2 domain occupies 316 to 387 (AVNSVQLSAA…TITVKTKNKG (72 aa)).

The protein belongs to the glycosyl hydrolase 16 family.

The protein resides in the periplasm. It catalyses the reaction Endohydrolysis of (1-&gt;4)-beta-D-linkages between D-galactose 4-sulfate and 3,6-anhydro-D-galactose in kappa-carrageenans.. The sequence is that of Kappa-carrageenase (cgkA) from Pseudoalteromonas carrageenovora (Alteromonas carrageenovora).